A 187-amino-acid chain; its full sequence is Acireductone dioxygenase 4 (187 aa).

Alanine 2 carries the N-acetylalanine modification. Fe(2+) is bound by residues histidine 89, histidine 91, glutamate 95, and histidine 134. Residues histidine 89, histidine 91, glutamate 95, and histidine 134 each contribute to the Ni(2+) site.

It belongs to the acireductone dioxygenase (ARD) family. Fe(2+) serves as cofactor. It depends on Ni(2+) as a cofactor.

It is found in the cytoplasm. Its subcellular location is the nucleus. The catalysed reaction is 1,2-dihydroxy-5-(methylsulfanyl)pent-1-en-3-one + O2 = 4-methylsulfanyl-2-oxobutanoate + formate + 2 H(+). It catalyses the reaction 1,2-dihydroxy-5-(methylsulfanyl)pent-1-en-3-one + O2 = 3-(methylsulfanyl)propanoate + CO + formate + 2 H(+). Its pathway is amino-acid biosynthesis; L-methionine biosynthesis via salvage pathway; L-methionine from S-methyl-5-thio-alpha-D-ribose 1-phosphate: step 5/6. Its function is as follows. Catalyzes 2 different reactions between oxygen and the acireductone 1,2-dihydroxy-3-keto-5-methylthiopentene (DHK-MTPene) depending upon the metal bound in the active site. Fe-containing acireductone dioxygenase (Fe-ARD) produces formate and 2-keto-4-methylthiobutyrate (KMTB), the alpha-ketoacid precursor of methionine in the methionine recycle pathway. Ni-containing acireductone dioxygenase (Ni-ARD) produces methylthiopropionate, carbon monoxide and formate, and does not lie on the methionine recycle pathway. The sequence is that of Acireductone dioxygenase 4 (ARD4) from Arabidopsis thaliana (Mouse-ear cress).